We begin with the raw amino-acid sequence, 117 residues long: Large ribosomal subunit protein bL20 (117 aa).

Belongs to the bacterial ribosomal protein bL20 family.

In terms of biological role, binds directly to 23S ribosomal RNA and is necessary for the in vitro assembly process of the 50S ribosomal subunit. It is not involved in the protein synthesizing functions of that subunit. The protein is Large ribosomal subunit protein bL20 of Geobacter sulfurreducens (strain ATCC 51573 / DSM 12127 / PCA).